The chain runs to 509 residues: Poly(A) RNA polymerase GLD2-B (509 aa).

Residues 88–125 form a disordered region; sequence PGSPPSSFQNRKRRSDEGNSPYDVKRQRFQSPQEQTVN. Residues 116–125 show a composition bias toward polar residues; it reads FQSPQEQTVN. The Mg(2+) site is built by Asp-240 and Asp-242. The region spanning 409-462 is the PAP-associated domain; it reads LGDLLLGFLKYFAVEFDWSKDIISLREAKALPRTDDYEWRNKYICVEEPFDGSN.

Belongs to the DNA polymerase type-B-like family. GLD2 subfamily. In terms of assembly, component of a complex at least composed of cpeb1, cpsf1, tent2/gld2, pabpc1/ePAB, parn and sympk. Following oocyte maturation, parn is expelled from the complex. Interacts with rbfox2. Interacts with sympk. Requires Mg(2+) as cofactor. It depends on Mn(2+) as a cofactor.

The protein localises to the cytoplasm. It catalyses the reaction RNA(n) + ATP = RNA(n)-3'-adenine ribonucleotide + diphosphate. Its function is as follows. Cytoplasmic poly(A) RNA polymerase that adds successive AMP monomers to the 3'-end of specific RNAs, forming a poly(A) tail. In contrast to the canonical nuclear poly(A) RNA polymerase, it only adds poly(A) to selected cytoplasmic mRNAs during oocyte maturation. Plays a central role during oocyte maturation by mediating polyadenylation of dormant mRNAs, which contain 5'AAUAAA-3' sequence in their 3'-UTR. In immature oocytes, polyadenylation of poly(A) tails is counteracted by the ribonuclease parn. During maturation parn is excluded from the ribonucleoprotein complex, allowing poly(A) elongation and activation of mRNAs. May not play a role in replication-dependent histone mRNA degradation. This chain is Poly(A) RNA polymerase GLD2-B, found in Xenopus laevis (African clawed frog).